A 362-amino-acid chain; its full sequence is Tyrosine-protein kinase SRK2 (362 aa).

Residues 1 to 70 (TFLVRESESK…GLCVNLRQPC (70 aa)) form the SH2 domain. Positions 95–348 (ITLIRKLGAG…ALQWRLEDFF (254 aa)) constitute a Protein kinase domain. Residues 101 to 109 (LGAGQFGEV) and K123 contribute to the ATP site. D214 serves as the catalytic Proton acceptor.

Belongs to the protein kinase superfamily. Tyr protein kinase family.

The protein resides in the cytoplasm. The catalysed reaction is L-tyrosyl-[protein] + ATP = O-phospho-L-tyrosyl-[protein] + ADP + H(+). The sequence is that of Tyrosine-protein kinase SRK2 (SRK2) from Spongilla lacustris (Freshwater sponge).